Consider the following 161-residue polypeptide: Ferric uptake regulation protein 1 (161 aa).

Zn(2+) contacts are provided by cysteine 94 and cysteine 97.

This sequence belongs to the Fur family.

It is found in the cytoplasm. Its function is as follows. Acts as a global negative controlling element, employing Fe(2+) as a cofactor to bind the operator of the repressed genes. This Mycolicibacterium fortuitum (Mycobacterium fortuitum) protein is Ferric uptake regulation protein 1 (fur1).